Reading from the N-terminus, the 918-residue chain is Isoleucine--tRNA ligase 1 (918 aa).

The 'HIGH' region motif lies at 57 to 67 (PYANGDIHIGH). E553 contributes to the L-isoleucyl-5'-AMP binding site. The short motif at 594–598 (KMSKS) is the 'KMSKS' region element. Residue K597 coordinates ATP. 4 residues coordinate Zn(2+): C885, C888, C905, and C908.

It belongs to the class-I aminoacyl-tRNA synthetase family. IleS type 1 subfamily. Monomer. Zn(2+) is required as a cofactor.

It is found in the cytoplasm. It carries out the reaction tRNA(Ile) + L-isoleucine + ATP = L-isoleucyl-tRNA(Ile) + AMP + diphosphate. In terms of biological role, catalyzes the attachment of isoleucine to tRNA(Ile). As IleRS can inadvertently accommodate and process structurally similar amino acids such as valine, to avoid such errors it has two additional distinct tRNA(Ile)-dependent editing activities. One activity is designated as 'pretransfer' editing and involves the hydrolysis of activated Val-AMP. The other activity is designated 'posttransfer' editing and involves deacylation of mischarged Val-tRNA(Ile). This Oceanobacillus iheyensis (strain DSM 14371 / CIP 107618 / JCM 11309 / KCTC 3954 / HTE831) protein is Isoleucine--tRNA ligase 1.